The primary structure comprises 147 residues: Lysozyme C, tracheal isozyme (147 aa).

Positions Met-1–Gly-18 are cleaved as a signal peptide. One can recognise a C-type lysozyme domain in the interval Lys-19–Val-147. Disulfide bonds link Cys-24/Cys-145, Cys-48/Cys-133, Cys-83/Cys-99, and Cys-95/Cys-113. Active-site residues include Glu-53 and Asp-71.

This sequence belongs to the glycosyl hydrolase 22 family. As to quaternary structure, monomer. In terms of tissue distribution, trachea.

It catalyses the reaction Hydrolysis of (1-&gt;4)-beta-linkages between N-acetylmuramic acid and N-acetyl-D-glucosamine residues in a peptidoglycan and between N-acetyl-D-glucosamine residues in chitodextrins.. Lysozymes have primarily a bacteriolytic function; those in tissues and body fluids are associated with the monocyte-macrophage system and enhance the activity of immunoagents. This is Lysozyme C, tracheal isozyme from Bos taurus (Bovine).